Consider the following 273-residue polypeptide: Ribosomal RNA small subunit methyltransferase A (273 aa).

S-adenosyl-L-methionine contacts are provided by Asn-18, Leu-20, Gly-45, Glu-66, Asp-91, and Asn-113.

This sequence belongs to the class I-like SAM-binding methyltransferase superfamily. rRNA adenine N(6)-methyltransferase family. RsmA subfamily.

It localises to the cytoplasm. The enzyme catalyses adenosine(1518)/adenosine(1519) in 16S rRNA + 4 S-adenosyl-L-methionine = N(6)-dimethyladenosine(1518)/N(6)-dimethyladenosine(1519) in 16S rRNA + 4 S-adenosyl-L-homocysteine + 4 H(+). Its function is as follows. Specifically dimethylates two adjacent adenosines (A1518 and A1519) in the loop of a conserved hairpin near the 3'-end of 16S rRNA in the 30S particle. May play a critical role in biogenesis of 30S subunits. This is Ribosomal RNA small subunit methyltransferase A from Escherichia coli (strain 55989 / EAEC).